Here is a 454-residue protein sequence, read N- to C-terminus: Probable ECA polymerase (454 aa).

Helical transmembrane passes span 3–23 (LGQF…ILTL), 39–59 (FSML…MLVF), 61–81 (FGVA…ATAF), 119–139 (LALV…FLLF), 154–174 (GVAL…VYFL), 180–200 (AWFF…VIVG), 201–221 (GTRA…IVRG), 222–242 (WITL…MFWL), 340–360 (LVVM…GLII), 377–397 (YKAA…IVLA), and 409–429 (VFFC…YWLF).

This sequence belongs to the WzyE family. In terms of assembly, probably part of a complex composed of WzxE, WzyE and WzzE.

The protein resides in the cell inner membrane. It functions in the pathway bacterial outer membrane biogenesis; enterobacterial common antigen biosynthesis. In terms of biological role, probably involved in the polymerization of enterobacterial common antigen (ECA) trisaccharide repeat units. The protein is Probable ECA polymerase of Yersinia pestis bv. Antiqua (strain Angola).